Here is a 295-residue protein sequence, read N- to C-terminus: ATP synthase gamma chain (295 aa).

It belongs to the ATPase gamma chain family. F-type ATPases have 2 components, CF(1) - the catalytic core - and CF(0) - the membrane proton channel. CF(1) has five subunits: alpha(3), beta(3), gamma(1), delta(1), epsilon(1). CF(0) has three main subunits: a, b and c.

The protein localises to the cell inner membrane. Its function is as follows. Produces ATP from ADP in the presence of a proton gradient across the membrane. The gamma chain is believed to be important in regulating ATPase activity and the flow of protons through the CF(0) complex. This chain is ATP synthase gamma chain, found in Maricaulis maris (strain MCS10) (Caulobacter maris).